Here is a 237-residue protein sequence, read N- to C-terminus: Flagellar brake protein YcgR (237 aa).

Residues 108 to 225 (QRRRQFRVTT…MERKIQSAVF (118 aa)) enclose the PilZ domain.

This sequence belongs to the YcgR family. As to quaternary structure, monomer. Interacts with the flagellar basal bodies.

The protein resides in the bacterial flagellum basal body. In terms of biological role, acts as a flagellar brake, regulating swimming and swarming in a bis-(3'-5') cyclic diguanylic acid (c-di-GMP)-dependent manner. Binds 1 c-di-GMP dimer per subunit. Increasing levels of c-di-GMP lead to decreased motility. In Serratia proteamaculans (strain 568), this protein is Flagellar brake protein YcgR.